A 328-amino-acid chain; its full sequence is Malate dehydrogenase (328 aa).

12–18 (GAAGQIG) contributes to the NAD(+) binding site. Residues Arg-93 and Arg-99 each coordinate substrate. NAD(+) is bound by residues Asn-106, Gln-113, and 130-132 (VGN). 2 residues coordinate substrate: Asn-132 and Arg-166. His-191 serves as the catalytic Proton acceptor.

It belongs to the LDH/MDH superfamily. MDH type 2 family.

The enzyme catalyses (S)-malate + NAD(+) = oxaloacetate + NADH + H(+). In terms of biological role, catalyzes the reversible oxidation of malate to oxaloacetate. The protein is Malate dehydrogenase of Dechloromonas aromatica (strain RCB).